A 152-amino-acid chain; its full sequence is UPF0756 membrane protein EF_1246 (152 aa).

The next 4 helical transmembrane spans lie at 4–24 (WLFL…SLLI), 52–72 (LGVT…QIGL), 85–105 (WLGI…VGLI), and 115–135 (LVFG…GPII).

Belongs to the UPF0756 family.

It is found in the cell membrane. The protein is UPF0756 membrane protein EF_1246 of Enterococcus faecalis (strain ATCC 700802 / V583).